Here is a 111-residue protein sequence, read N- to C-terminus: Ribosome-binding factor A (111 aa).

This sequence belongs to the RbfA family. In terms of assembly, monomer. Binds 30S ribosomal subunits, but not 50S ribosomal subunits or 70S ribosomes.

Its subcellular location is the cytoplasm. One of several proteins that assist in the late maturation steps of the functional core of the 30S ribosomal subunit. Associates with free 30S ribosomal subunits (but not with 30S subunits that are part of 70S ribosomes or polysomes). Required for efficient processing of 16S rRNA. May interact with the 5'-terminal helix region of 16S rRNA. The chain is Ribosome-binding factor A from Helicobacter pylori (strain Shi470).